Consider the following 261-residue polypeptide: Putative [LysW]-aminoadipate/[LysW]-glutamate kinase (261 aa).

Substrate is bound by residues 35-36 (GG), Arg-62, and Asn-162.

The protein belongs to the acetylglutamate kinase family. LysZ subfamily.

The protein resides in the cytoplasm. The catalysed reaction is [amino-group carrier protein]-C-terminal-N-(1,4-dicarboxybutan-1-yl)-L-glutamine + ATP = [amino-group carrier protein]-C-terminal-N-(1-carboxy-5-phosphooxy-5-oxopentan-1-yl)-L-glutamine + ADP. It carries out the reaction [amino-group carrier protein]-C-terminal-gamma-(L-glutamyl)-L-glutamate + ATP = [amino-group carrier protein]-C-terminal-gamma-(5-phospho-L-glutamyl)-L-glutamate + ADP. It participates in amino-acid biosynthesis; L-lysine biosynthesis via AAA pathway; L-lysine from L-alpha-aminoadipate (Thermus route): step 2/5. It functions in the pathway amino-acid biosynthesis; L-arginine biosynthesis. Its function is as follows. Involved in both the arginine and lysine biosynthetic pathways. Phosphorylates the LysW-bound precursors glutamate (for arginine biosynthesis), respectively alpha-aminoadipate (for lysine biosynthesis). The polypeptide is Putative [LysW]-aminoadipate/[LysW]-glutamate kinase (Pyrobaculum aerophilum (strain ATCC 51768 / DSM 7523 / JCM 9630 / CIP 104966 / NBRC 100827 / IM2)).